Consider the following 66-residue polypeptide: Large ribosomal subunit protein bL35 (66 aa).

Residues 1–14 (MPKMKTKSAAKKRF) are compositionally biased toward basic residues. The segment at 1–34 (MPKMKTKSAAKKRFSMTATGKVKAGPAGKRHGMI) is disordered.

Belongs to the bacterial ribosomal protein bL35 family.

The chain is Large ribosomal subunit protein bL35 from Paracoccus denitrificans (strain Pd 1222).